Consider the following 404-residue polypeptide: Argininosuccinate synthase (404 aa).

ATP contacts are provided by residues 9–17 (AYSGGLDTS) and alanine 36. L-citrulline is bound at residue tyrosine 87. Residue glycine 117 coordinates ATP. L-aspartate is bound by residues threonine 119, asparagine 123, and aspartate 124. Asparagine 123 provides a ligand contact to L-citrulline. L-citrulline contacts are provided by arginine 127, serine 176, and glutamate 261.

The protein belongs to the argininosuccinate synthase family. Type 1 subfamily. As to quaternary structure, homotetramer.

The protein localises to the cytoplasm. The catalysed reaction is L-citrulline + L-aspartate + ATP = 2-(N(omega)-L-arginino)succinate + AMP + diphosphate + H(+). Its pathway is amino-acid biosynthesis; L-arginine biosynthesis; L-arginine from L-ornithine and carbamoyl phosphate: step 2/3. This is Argininosuccinate synthase from Burkholderia pseudomallei (strain K96243).